A 119-amino-acid polypeptide reads, in one-letter code: NADH dehydrogenase [ubiquinone] 1 subunit C2 (119 aa).

Residues 56–75 (GLHRQLLYITAFFFAGYYLV) form a helical membrane-spanning segment.

It belongs to the complex I NDUFC2 subunit family. As to quaternary structure, complex I is composed of 45 different subunits. Interacts with TMEM242.

The protein resides in the mitochondrion inner membrane. Accessory subunit of the mitochondrial membrane respiratory chain NADH dehydrogenase (Complex I), that is believed not to be involved in catalysis but required for the complex assembly. Complex I functions in the transfer of electrons from NADH to the respiratory chain. The immediate electron acceptor for the enzyme is believed to be ubiquinone. The protein is NADH dehydrogenase [ubiquinone] 1 subunit C2 of Gorilla gorilla gorilla (Western lowland gorilla).